The primary structure comprises 225 residues: Cytidylate kinase (225 aa).

An ATP-binding site is contributed by 11-19 (GPAGAGKGT). Over residues 169–185 (MDRIKSRIEERDARDQS) the composition is skewed to basic and acidic residues. A disordered region spans residues 169 to 195 (MDRIKSRIEERDARDQSRATAPLAAAP).

Belongs to the cytidylate kinase family. Type 1 subfamily.

The protein resides in the cytoplasm. It carries out the reaction CMP + ATP = CDP + ADP. The catalysed reaction is dCMP + ATP = dCDP + ADP. This Magnetococcus marinus (strain ATCC BAA-1437 / JCM 17883 / MC-1) protein is Cytidylate kinase.